An 871-amino-acid polypeptide reads, in one-letter code: Patatin-like phospholipase domain-containing protein CNBE2340 (871 aa).

The disordered stretch occupies residues 20–53; that stretch reads NEDSPLSPRSFSLPPESPQLSTASPIHQRVSRKR. Residues 23-33 are compositionally biased toward low complexity; it reads SPLSPRSFSLP. A helical membrane pass occupies residues 68 to 88; it reads WPLLFFIFFIIYLEFSAYVIT. The 193-residue stretch at 243–435 folds into the PNPLA domain; it reads LCLSGGASFG…REDIPLGSLH (193 aa). Positions 274–278 match the GXSXG motif; the sequence is GTSAG. The active-site Nucleophile is serine 276. Residue aspartate 422 is the Proton acceptor of the active site. Disordered regions lie at residues 586–707, 720–748, and 760–871; these read ALSH…NFGD, LSSP…QRFR, and VSES…QDGA. Polar residues-rich tracts occupy residues 594-606 and 687-706; these read NDPA…TNPE and PTHS…SNFG. Residues 721–748 are compositionally biased toward low complexity; sequence SSPFRSIRSNTSSSSNNVQSPSSSQRFR. Over residues 798–820 the composition is skewed to basic and acidic residues; that stretch reads VESHSDRSEDEMLHSGANVKEEY.

The protein belongs to the PLPL family.

The protein resides in the membrane. Probable lipid hydrolase. The chain is Patatin-like phospholipase domain-containing protein CNBE2340 from Cryptococcus neoformans var. neoformans serotype D (strain B-3501A) (Filobasidiella neoformans).